Reading from the N-terminus, the 56-residue chain is UPF0391 membrane protein Bd1438 (56 aa).

The next 2 helical transmembrane spans lie at 4 to 24 (AAIAFFIIAIVAYIFGASGVA) and 33 to 53 (ILLFVFLALAIISFVINLVSG).

Belongs to the UPF0391 family.

The protein localises to the cell membrane. This Bdellovibrio bacteriovorus (strain ATCC 15356 / DSM 50701 / NCIMB 9529 / HD100) protein is UPF0391 membrane protein Bd1438.